Consider the following 152-residue polypeptide: MSTVPVKIKPLDHYEGLALPAYETPQSAGMDLRAAVPADEPVSIPPGEWRLIPVGIAIALPAGFEAQVRPRSGLAAKHGISCVNTPGTVDADYRGEIRVNLINHGQANFVVNRGDRIAQMIIAPVTQAVWEIADTLDETTRGTGGFGSTGTK.

Substrate-binding positions include 71-73 (RSG), N84, and 88-90 (TVD).

This sequence belongs to the dUTPase family. Mg(2+) serves as cofactor.

The catalysed reaction is dUTP + H2O = dUMP + diphosphate + H(+). It participates in pyrimidine metabolism; dUMP biosynthesis; dUMP from dCTP (dUTP route): step 2/2. Functionally, this enzyme is involved in nucleotide metabolism: it produces dUMP, the immediate precursor of thymidine nucleotides and it decreases the intracellular concentration of dUTP so that uracil cannot be incorporated into DNA. This Maricaulis maris (strain MCS10) (Caulobacter maris) protein is Deoxyuridine 5'-triphosphate nucleotidohydrolase.